We begin with the raw amino-acid sequence, 602 residues long: Aspartate--tRNA(Asp/Asn) ligase (602 aa).

Residue Glu175 participates in L-aspartate binding. Positions 199 to 202 (QIFK) are aspartate. Arg221 contributes to the L-aspartate binding site. ATP contacts are provided by residues 221–223 (RDE) and Gln230. His458 is an L-aspartate binding site. Glu492 is an ATP binding site. Arg499 lines the L-aspartate pocket. ATP is bound at residue 544-547 (GLDR).

It belongs to the class-II aminoacyl-tRNA synthetase family. Type 1 subfamily. In terms of assembly, homodimer.

The protein resides in the cytoplasm. It carries out the reaction tRNA(Asx) + L-aspartate + ATP = L-aspartyl-tRNA(Asx) + AMP + diphosphate. Its function is as follows. Aspartyl-tRNA synthetase with relaxed tRNA specificity since it is able to aspartylate not only its cognate tRNA(Asp) but also tRNA(Asn). Reaction proceeds in two steps: L-aspartate is first activated by ATP to form Asp-AMP and then transferred to the acceptor end of tRNA(Asp/Asn). The chain is Aspartate--tRNA(Asp/Asn) ligase from Cupriavidus taiwanensis (strain DSM 17343 / BCRC 17206 / CCUG 44338 / CIP 107171 / LMG 19424 / R1) (Ralstonia taiwanensis (strain LMG 19424)).